Reading from the N-terminus, the 112-residue chain is Putative pterin-4-alpha-carbinolamine dehydratase (112 aa).

This sequence belongs to the pterin-4-alpha-carbinolamine dehydratase family.

It catalyses the reaction (4aS,6R)-4a-hydroxy-L-erythro-5,6,7,8-tetrahydrobiopterin = (6R)-L-erythro-6,7-dihydrobiopterin + H2O. The protein is Putative pterin-4-alpha-carbinolamine dehydratase of Shewanella baltica (strain OS155 / ATCC BAA-1091).